A 283-amino-acid polypeptide reads, in one-letter code: Ubiquinone biosynthesis protein COQ4, mitochondrial (283 aa).

Residues 1-25 (MAIAKSVRARAVGLRSLRVLCAQRS) constitute a mitochondrion transit peptide. Zn(2+)-binding residues include histidine 166, aspartate 167, histidine 170, and glutamate 182.

The protein belongs to the COQ4 family. In terms of assembly, component of a multi-subunit COQ enzyme complex, composed of at least COQ3, COQ4, COQ5, COQ6, COQ7 and COQ9. Zn(2+) serves as cofactor.

It is found in the mitochondrion inner membrane. It catalyses the reaction a 4-hydroxy-3-methoxy-5-(all-trans-polyprenyl)benzoate + H(+) = a 2-methoxy-6-(all-trans-polyprenyl)phenol + CO2. It functions in the pathway cofactor biosynthesis; ubiquinone biosynthesis. Functionally, lyase that catalyzes the C1-decarboxylation of 4-hydroxy-3-methoxy-5-(all-trans-polyprenyl)benzoic acid into 2-methoxy-6-(all-trans-polyprenyl)phenol during ubiquinone biosynthesis. In Coccidioides immitis (strain RS) (Valley fever fungus), this protein is Ubiquinone biosynthesis protein COQ4, mitochondrial.